The primary structure comprises 290 residues: ATP synthase gamma chain (290 aa).

Belongs to the ATPase gamma chain family. F-type ATPases have 2 components, CF(1) - the catalytic core - and CF(0) - the membrane proton channel. CF(1) has five subunits: alpha(3), beta(3), gamma(1), delta(1), epsilon(1). CF(0) has three main subunits: a, b and c.

Its subcellular location is the cell membrane. Produces ATP from ADP in the presence of a proton gradient across the membrane. The gamma chain is believed to be important in regulating ATPase activity and the flow of protons through the CF(0) complex. The chain is ATP synthase gamma chain from Chloroflexus aurantiacus (strain ATCC 29366 / DSM 635 / J-10-fl).